The chain runs to 300 residues: Aspartate carbamoyltransferase catalytic subunit (300 aa).

Carbamoyl phosphate is bound by residues arginine 54 and threonine 55. L-aspartate is bound at residue lysine 82. 3 residues coordinate carbamoyl phosphate: arginine 104, histidine 131, and glutamine 134. L-aspartate-binding residues include arginine 164 and arginine 213. Residues alanine 256 and proline 257 each coordinate carbamoyl phosphate.

The protein belongs to the aspartate/ornithine carbamoyltransferase superfamily. ATCase family. In terms of assembly, heterododecamer (2C3:3R2) of six catalytic PyrB chains organized as two trimers (C3), and six regulatory PyrI chains organized as three dimers (R2).

The enzyme catalyses carbamoyl phosphate + L-aspartate = N-carbamoyl-L-aspartate + phosphate + H(+). Its pathway is pyrimidine metabolism; UMP biosynthesis via de novo pathway; (S)-dihydroorotate from bicarbonate: step 2/3. Catalyzes the condensation of carbamoyl phosphate and aspartate to form carbamoyl aspartate and inorganic phosphate, the committed step in the de novo pyrimidine nucleotide biosynthesis pathway. This Malacoplasma penetrans (strain HF-2) (Mycoplasma penetrans) protein is Aspartate carbamoyltransferase catalytic subunit.